A 163-amino-acid chain; its full sequence is Peptidyl-prolyl cis-trans isomerase-like 1 (163 aa).

Residues 1–155 (MATDVAVETT…TEVKIVKARV (155 aa)) form the PPIase cyclophilin-type domain.

The protein belongs to the cyclophilin-type PPIase family. PPIL1 subfamily.

The enzyme catalyses [protein]-peptidylproline (omega=180) = [protein]-peptidylproline (omega=0). Its function is as follows. PPIases accelerate the folding of proteins. It catalyzes the cis-trans isomerization of proline imidic peptide bonds in oligopeptides. The protein is Peptidyl-prolyl cis-trans isomerase-like 1 (ppi-1) of Neurospora crassa (strain ATCC 24698 / 74-OR23-1A / CBS 708.71 / DSM 1257 / FGSC 987).